Here is a 783-residue protein sequence, read N- to C-terminus: Protein transport protein SEC23 B (783 aa).

Positions 59, 62, 81, and 84 each coordinate Zn(2+). Residues 59-84 (CRICTAALNPFARVDFLAKIWICPIC) form a zinc finger-like region.

Belongs to the SEC23/SEC24 family. SEC23 subfamily. In terms of assembly, component of the coat protein complex II (COPII), composed of at least five proteins: the Sec23/24 complex, the Sec13/31 complex and Sar1. Interacts with SEC24A.

It localises to the cytoplasmic vesicle. It is found in the COPII-coated vesicle membrane. Its subcellular location is the endoplasmic reticulum membrane. The protein localises to the membrane. Its function is as follows. Component of the coat protein complex II (COPII) which promotes the formation of transport vesicles from the endoplasmic reticulum (ER). The coat has two main functions, the physical deformation of the endoplasmic reticulum membrane into vesicles and the selection of cargo molecules. The chain is Protein transport protein SEC23 B from Arabidopsis thaliana (Mouse-ear cress).